The sequence spans 387 residues: Na(+)/H(+)-K(+) antiporter GerN (387 aa).

11 helical membrane-spanning segments follow: residues 29-49, 54-74, 87-107, 114-134, 149-169, 175-195, 219-239, 263-283, 290-310, 324-344, and 347-367; these read PSVL…LGWI, LLTQ…GLET, LAVA…SGLV, NAVF…VQTL, LGAA…AMSF, VNLT…ILIG, ALII…AGII, PIAY…NITF, IWFI…GCGF, IIGA…GTGL, and GLLA…TTMI.

The protein belongs to the monovalent cation:proton antiporter 2 (CPA2) transporter (TC 2.A.37) family.

It is found in the membrane. Its function is as follows. Na(+)/H(+) antiporter that extrudes sodium in exchange for external protons. Can also use potassium as a coupling ion, without completely replacing H(+). This Na(+)/H(+)-K(+) antiport is much more rapid than Na(+)/H(+) antiport. Can also extrude lithium. Important for the inosine-dependent germination of spores. The chain is Na(+)/H(+)-K(+) antiporter GerN (gerN) from Bacillus cereus.